A 1429-amino-acid polypeptide reads, in one-letter code: Inactive rhomboid protein 1 (1429 aa).

Disordered stretches follow at residues 1-36 (MSSN…STRR), 560-579 (GNED…PDRP), and 740-766 (TSAL…QPGA). The Cytoplasmic portion of the chain corresponds to 1 to 843 (MSSNGSDLGH…RPFFTYWINT (843 aa)). A compositionally biased stretch (low complexity) spans 22 to 33 (SVHSSMRGSMSS). 2 stretches are compositionally biased toward polar residues: residues 564 to 573 (AGQSNGTNGN) and 740 to 763 (TSAL…SSHQ). The chain crosses the membrane as a helical span at residues 844–864 (VQVVVLILSIICYGIAPIGIG). Residues 865–1099 (SEQKTGQVLV…PDQLYRLLTS (235 aa)) lie on the Lumenal side of the membrane. Residues 1100–1120 (LCMHAGILHLAITLIFQHLFL) traverse the membrane as a helical segment. Topologically, residues 1121–1131 (ADLERLIGTVR) are cytoplasmic. The chain crosses the membrane as a helical span at residues 1132 to 1152 (TAIVYIMSGFAGNLTSAILVP). Residues 1153–1156 (HRPE) are Lumenal-facing. The chain crosses the membrane as a helical span at residues 1157 to 1177 (VGPSASLSGVVASLIALLVWM). Topologically, residues 1178 to 1186 (HWKYLHKPH) are cytoplasmic. Residues 1187 to 1207 (IALFKLLLLCSVLVGIGTLPY) traverse the membrane as a helical segment. Over 1208–1210 (QLN) the chain is Lumenal. A helical transmembrane segment spans residues 1211–1231 (FLGLLAGVICGCLLTMSLVPF). The Cytoplasmic portion of the chain corresponds to 1232–1245 (TTFSKYGRKKKINL). Residues 1246–1266 (IWTCVLFHVVVYTAMIVTFYI) form a helical membrane-spanning segment. The Lumenal segment spans residues 1267–1429 (HPSEFHSISF…INNNTEFNVL (163 aa)).

It belongs to the peptidase S54 family. As to expression, specifically expressed in the nervous system and in brain.

The protein resides in the endoplasmic reticulum membrane. Functionally, rhomboid protease-like protein which has no protease activity but regulates the secretion of several ligands of the epidermal growth factor receptor. Indirectly activates the epidermal growth factor receptor signaling pathway and may thereby regulate sleep, cell survival, proliferation and migration. The chain is Inactive rhomboid protein 1 (rho-5) from Drosophila melanogaster (Fruit fly).